The sequence spans 472 residues: MPAIKKRKIAREAPQQEDHSDSEAHSSASEDAAPNTTEQEQEPSEAPKQAPKSFKELGLIEQLCEACDSMGYKAPTAIQAEAIPLALQGRDLIGLAETGSGKTAAFALPILQALMDKPSSFFGLVLAPTRELAYQISQAFEGLGSTISVRSTVLVGGMDMVSQSIALGKKPHIIVATPGRLLDHLENTKGFSLRNLKYLVMDEADRLLDMDFGPILDKILKVLPRERRTYLFSATMSSKVESLQRASLQNPLRVAVSSSKFQTVSTLQQSYIFIPHKHKDLYLVYLLNEFVGQSCIIFCRTVHETQRLSFFLRLLGFGAIPLHGQLSQSARLGALGKFRSRSRDILVATDVAARGLDIPSVDVVLNFDLPGDSKTFIHRIGRTARAGKSGVAISFATQYDVEAWLRIEGALGKKLPEYPAEKDEVMVLAERVSEAQRSAILEMKNYDEKKGSRGKKFAKGKRSREDMDQEEG.

The interval 1 to 52 is disordered; that stretch reads MPAIKKRKIAREAPQQEDHSDSEAHSSASEDAAPNTTEQEQEPSEAPKQAPK. Residues 10–24 show a composition bias toward basic and acidic residues; the sequence is AREAPQQEDHSDSEA. The short motif at 52–80 is the Q motif element; the sequence is KSFKELGLIEQLCEACDSMGYKAPTAIQA. A Helicase ATP-binding domain is found at 83–254; it reads IPLALQGRDL…RASLQNPLRV (172 aa). Residue 96 to 103 coordinates ATP; sequence AETGSGKT. The short motif at 202–205 is the DEAD box element; the sequence is DEAD. Positions 282-426 constitute a Helicase C-terminal domain; that stretch reads YLVYLLNEFV…EYPAEKDEVM (145 aa). The interval 443 to 472 is disordered; that stretch reads MKNYDEKKGSRGKKFAKGKRSREDMDQEEG. Basic residues predominate over residues 452–462; sequence SRGKKFAKGKR.

It belongs to the DEAD box helicase family. DDX47/RRP3 subfamily. Interacts with the SSU processome.

It is found in the nucleus. The catalysed reaction is ATP + H2O = ADP + phosphate + H(+). Its function is as follows. ATP-dependent rRNA helicase required for pre-ribosomal RNA processing. Involved in the maturation of the 35S-pre-rRNA and to its cleavage to mature 18S rRNA. The polypeptide is ATP-dependent rRNA helicase rrp3 (Aspergillus oryzae (strain ATCC 42149 / RIB 40) (Yellow koji mold)).